The following is a 682-amino-acid chain: Methionine--tRNA ligase (682 aa).

Residues 15 to 25 (PYANGAIHLGH) carry the 'HIGH' region motif. Residues Cys-146, Cys-149, Cys-159, and Cys-162 each contribute to the Zn(2+) site. The short motif at 331–335 (KMSKS) is the 'KMSKS' region element. Lys-334 serves as a coordination point for ATP. The 103-residue stretch at 580 to 682 (DLAKLDMRVA…NGVTAGMQVK (103 aa)) folds into the tRNA-binding domain.

The protein belongs to the class-I aminoacyl-tRNA synthetase family. MetG type 1 subfamily. Homodimer. The cofactor is Zn(2+).

The protein resides in the cytoplasm. The enzyme catalyses tRNA(Met) + L-methionine + ATP = L-methionyl-tRNA(Met) + AMP + diphosphate. Is required not only for elongation of protein synthesis but also for the initiation of all mRNA translation through initiator tRNA(fMet) aminoacylation. The polypeptide is Methionine--tRNA ligase (Haemophilus influenzae (strain 86-028NP)).